A 170-amino-acid polypeptide reads, in one-letter code: Two-component response regulator ORR6 (170 aa).

The Response regulatory domain occupies 51–170 (HVLAVDDSSV…DVSRLCSRIR (120 aa)). A 4-aspartylphosphate modification is found at Asp-103.

This sequence belongs to the ARR family. Type-A subfamily. In terms of processing, two-component system major event consists of a His-to-Asp phosphorelay between a sensor histidine kinase (HK) and a response regulator (RR). In plants, the His-to-Asp phosphorelay involves an additional intermediate named Histidine-containing phosphotransfer protein (HPt). This multistep phosphorelay consists of a His-Asp-His-Asp sequential transfer of a phosphate group between first a His and an Asp of the HK protein, followed by the transfer to a conserved His of the HPt protein and finally the transfer to an Asp in the receiver domain of the RR protein. As to expression, expressed in roots, leaf blades, leaf sheaths, shoot apex, flowers and panicles.

Functionally, functions as a response regulator involved in His-to-Asp phosphorelay signal transduction system. Phosphorylation of the Asp residue in the receiver domain activates the ability of the protein to promote the transcription of target genes. Type-A response regulators seem to act as negative regulators of the cytokinin signaling. The chain is Two-component response regulator ORR6 from Oryza sativa subsp. japonica (Rice).